A 315-amino-acid chain; its full sequence is Probable carboxylesterase 3 (315 aa).

Methionine 1 carries the post-translational modification N-acetylmethionine. The Involved in the stabilization of the negatively charged intermediate by the formation of the oxyanion hole motif lies at 81–83 (HGG). Active-site residues include serine 160, aspartate 258, and histidine 290.

It belongs to the 'GDXG' lipolytic enzyme family. Expressed in flowers and siliques.

The enzyme catalyses a carboxylic ester + H2O = an alcohol + a carboxylate + H(+). In terms of biological role, carboxylesterase acting on esters with varying acyl chain length. The polypeptide is Probable carboxylesterase 3 (CXE3) (Arabidopsis thaliana (Mouse-ear cress)).